The chain runs to 71 residues: MSLSNEEMISNIRQKLNIVNQALFNPEKFKSTPHQDISEIYEFVMSKDSFSPSEVTAIADHLGQLRQDMED.

It belongs to the UPF0435 family.

This is UPF0435 protein SERP1418 from Staphylococcus epidermidis (strain ATCC 35984 / DSM 28319 / BCRC 17069 / CCUG 31568 / BM 3577 / RP62A).